Reading from the N-terminus, the 157-residue chain is Aspartate carbamoyltransferase regulatory chain (157 aa).

Positions 108, 113, 138, and 141 each coordinate Zn(2+).

This sequence belongs to the PyrI family. Contains catalytic and regulatory chains. Zn(2+) serves as cofactor.

Its function is as follows. Involved in allosteric regulation of aspartate carbamoyltransferase. This is Aspartate carbamoyltransferase regulatory chain from Korarchaeum cryptofilum (strain OPF8).